The sequence spans 174 residues: Shikimate kinase 2 (174 aa).

12 to 17 (GCGKTT) lines the ATP pocket. The Mg(2+) site is built by Thr16 and Asp32. Substrate is bound by residues Asp34, Arg58, and Gly79. The segment at 112-126 (QAAPEEDLRPTLTGK) is LID domain. Arg120 is a binding site for ATP. Arg139 lines the substrate pocket.

The protein belongs to the shikimate kinase family. AroL subfamily. Monomer. Requires Mg(2+) as cofactor.

The protein localises to the cytoplasm. It carries out the reaction shikimate + ATP = 3-phosphoshikimate + ADP + H(+). It functions in the pathway metabolic intermediate biosynthesis; chorismate biosynthesis; chorismate from D-erythrose 4-phosphate and phosphoenolpyruvate: step 5/7. Catalyzes the specific phosphorylation of the 3-hydroxyl group of shikimic acid using ATP as a cosubstrate. This chain is Shikimate kinase 2, found in Shigella boydii serotype 18 (strain CDC 3083-94 / BS512).